Consider the following 456-residue polypeptide: Heme sensor protein HssS (456 aa).

2 helical membrane passes run 9–29 (IAIY…LFAN) and 164–184 (TFLA…VIAS). One can recognise an HAMP domain in the interval 186–238 (YSIIKPIKILKQATERLMHGDFNSPIYQSRHDEIGTLQYRFEAMRQSLKQVDD). Residues 246-456 (NVSHEIKTPL…TFTVTLPETN (211 aa)) enclose the Histidine kinase domain. The residue at position 249 (His249) is a Phosphohistidine; by autocatalysis.

In terms of processing, autophosphorylated.

It is found in the cell membrane. The enzyme catalyses ATP + protein L-histidine = ADP + protein N-phospho-L-histidine.. In terms of biological role, member of the two-component regulatory system HssS/HssR involved in intracellular heme homeostasis and tempering of staphylococcal virulence. HssS functions as a heme sensor histidine kinase which is autophosphorylated at a histidine residue and transfers its phosphate group to an aspartate residue of HssR. HssR/HssS activates the expression of hrtAB, an efflux pump, in response to extracellular heme, hemin, hemoglobin or blood. This Staphylococcus haemolyticus (strain JCSC1435) protein is Heme sensor protein HssS (hssS).